A 347-amino-acid polypeptide reads, in one-letter code: Oocyte-specific homeobox protein 6 (347 aa).

Disordered regions lie at residues M1 to F20 and P54 to Q86. Polar residues predominate over residues Q72–M85. The homeobox DNA-binding region spans H145–S204.

It belongs to the paired homeobox family. Obox subfamily. Specifically expressed in early embryos.

It localises to the nucleus. In terms of biological role, transcription factor required for zygotic genome activation (ZGA), a critical event in early embryonic development during which the developmental control passes from maternally provided mRNAs to the expression of the zygotic genome after fertilization. The chain is Oocyte-specific homeobox protein 6 from Mus musculus (Mouse).